Here is a 79-residue protein sequence, read N- to C-terminus: Small ribosomal subunit protein bS21A (79 aa).

Residues 57–79 form a disordered region; it reads LARKKLQREGLLPAPKKVLRPTR.

This sequence belongs to the bacterial ribosomal protein bS21 family.

The protein is Small ribosomal subunit protein bS21A of Rhizobium johnstonii (strain DSM 114642 / LMG 32736 / 3841) (Rhizobium leguminosarum bv. viciae).